The sequence spans 341 residues: L-threonine 3-dehydrogenase (341 aa).

Cys38 is a binding site for Zn(2+). Catalysis depends on charge relay system residues Thr40 and His43. The Zn(2+) site is built by His63, Glu64, Cys93, Cys96, Cys99, and Cys107. NAD(+) contacts are provided by residues Ile175, Asp195, Arg200, Leu262 to Ile264, and Ile286 to Tyr287.

This sequence belongs to the zinc-containing alcohol dehydrogenase family. In terms of assembly, homotetramer. Zn(2+) is required as a cofactor.

The protein resides in the cytoplasm. It carries out the reaction L-threonine + NAD(+) = (2S)-2-amino-3-oxobutanoate + NADH + H(+). It participates in amino-acid degradation; L-threonine degradation via oxydo-reductase pathway; glycine from L-threonine: step 1/2. Functionally, catalyzes the NAD(+)-dependent oxidation of L-threonine to 2-amino-3-ketobutyrate. In Shewanella halifaxensis (strain HAW-EB4), this protein is L-threonine 3-dehydrogenase.